The sequence spans 80 residues: Reactive oxygen species modulator 1 (80 aa).

A helical transmembrane segment spans residues Met-22 to Leu-44. Residues Ser-42–Thr-60 form a sufficient for antibacterial activity region.

It belongs to the MGR2 family.

Its subcellular location is the mitochondrion inner membrane. Its function is as follows. Has antibacterial activity against a variety of bacteria including S.aureus, P.aeruginosa and M.tuberculosis. Acts by inducing bacterial membrane breakage. Functionally, induces production of reactive oxygen species (ROS) which are necessary for cell proliferation. May play a role in inducing oxidative DNA damage and replicative senescence. May play a role in the coordination of mitochondrial morphology and cell proliferation. This Danio rerio (Zebrafish) protein is Reactive oxygen species modulator 1 (romo1).